The sequence spans 632 residues: Putative ankyrin repeat protein L767 (632 aa).

ANK repeat units lie at residues 61–97 (YGNT…DYEF), 228–250 (FDNE…YIVE), 251–282 (KGFY…NLTD), 345–374 (NLDI…NVDD), and 517–546 (NSIE…NDTD).

In Acanthamoeba polyphaga mimivirus (APMV), this protein is Putative ankyrin repeat protein L767.